The chain runs to 723 residues: Enolase-phosphatase E1 (723 aa).

Substrate-binding positions include 126–127 (SS) and K160. The disordered stretch occupies residues 239-723 (GAGAKRKIDE…TPTPPIEAES (485 aa)). 2 stretches are compositionally biased toward basic and acidic residues: residues 262 to 284 (VKKD…DEPA) and 293 to 308 (AAKE…KMEV). Over residues 311 to 320 (AAAAAAPPAD) the composition is skewed to low complexity. Composition is skewed to basic and acidic residues over residues 322-406 (AEEK…VVEE), 419-443 (AEEK…KPAE), 468-479 (EPAKEKPAEAEA), 487-496 (TKAEVVEKPA), 511-565 (SADK…KGEE), and 577-593 (VEAK…KSDA). 2 stretches are compositionally biased toward low complexity: residues 596-606 (VSTTTTTTSTE) and 636-647 (NGEAEPAAEAVV). The segment covering 653-666 (GKHEEKGDSDKEND) has biased composition (basic and acidic residues).

It belongs to the HAD-like hydrolase superfamily. MasA/MtnC family. As to quaternary structure, monomer.

It localises to the cytoplasm. It is found in the nucleus. The enzyme catalyses 5-methylsulfanyl-2,3-dioxopentyl phosphate + H2O = 1,2-dihydroxy-5-(methylsulfanyl)pent-1-en-3-one + phosphate. The protein operates within amino-acid biosynthesis; L-methionine biosynthesis via salvage pathway; L-methionine from S-methyl-5-thio-alpha-D-ribose 1-phosphate: step 3/6. It functions in the pathway amino-acid biosynthesis; L-methionine biosynthesis via salvage pathway; L-methionine from S-methyl-5-thio-alpha-D-ribose 1-phosphate: step 4/6. Its function is as follows. Bifunctional enzyme that catalyzes the enolization of 2,3-diketo-5-methylthiopentyl-1-phosphate (DK-MTP-1-P) into the intermediate 2-hydroxy-3-keto-5-methylthiopentenyl-1-phosphate (HK-MTPenyl-1-P), which is then dephosphorylated to form the acireductone 1,2-dihydroxy-3-keto-5-methylthiopentene (DHK-MTPene). In Culex quinquefasciatus (Southern house mosquito), this protein is Enolase-phosphatase E1.